Consider the following 341-residue polypeptide: L-threonine 3-dehydrogenase (341 aa).

Cys-38 is a Zn(2+) binding site. Catalysis depends on charge relay system residues Thr-40 and His-43. Zn(2+) contacts are provided by His-63, Glu-64, Cys-93, Cys-96, Cys-99, and Cys-107. NAD(+)-binding positions include Ile-175, Asp-195, Arg-200, 262–264 (LGI), and 286–287 (IY).

It belongs to the zinc-containing alcohol dehydrogenase family. As to quaternary structure, homotetramer. Requires Zn(2+) as cofactor.

The protein localises to the cytoplasm. The enzyme catalyses L-threonine + NAD(+) = (2S)-2-amino-3-oxobutanoate + NADH + H(+). The protein operates within amino-acid degradation; L-threonine degradation via oxydo-reductase pathway; glycine from L-threonine: step 1/2. Catalyzes the NAD(+)-dependent oxidation of L-threonine to 2-amino-3-ketobutyrate. In Idiomarina loihiensis (strain ATCC BAA-735 / DSM 15497 / L2-TR), this protein is L-threonine 3-dehydrogenase.